The sequence spans 533 residues: Light-independent protochlorophyllide reductase subunit B (533 aa).

Position 36 (Asp-36) interacts with [4Fe-4S] cluster. Asp-292 (proton donor) is an active-site residue. A substrate-binding site is contributed by 428–429 (GL).

This sequence belongs to the ChlB/BchB/BchZ family. Protochlorophyllide reductase is composed of three subunits; BchL, BchN and BchB. Forms a heterotetramer of two BchB and two BchN subunits. It depends on [4Fe-4S] cluster as a cofactor.

The catalysed reaction is chlorophyllide a + oxidized 2[4Fe-4S]-[ferredoxin] + 2 ADP + 2 phosphate = protochlorophyllide a + reduced 2[4Fe-4S]-[ferredoxin] + 2 ATP + 2 H2O. The protein operates within porphyrin-containing compound metabolism; bacteriochlorophyll biosynthesis (light-independent). Its function is as follows. Component of the dark-operative protochlorophyllide reductase (DPOR) that uses Mg-ATP and reduced ferredoxin to reduce ring D of protochlorophyllide (Pchlide) to form chlorophyllide a (Chlide). This reaction is light-independent. The NB-protein (BchN-BchB) is the catalytic component of the complex. The protein is Light-independent protochlorophyllide reductase subunit B of Prosthecochloris aestuarii (strain DSM 271 / SK 413).